Here is a 125-residue protein sequence, read N- to C-terminus: Holo-[acyl-carrier-protein] synthase (125 aa).

The Mg(2+) site is built by aspartate 8 and glutamate 57.

The protein belongs to the P-Pant transferase superfamily. AcpS family. The cofactor is Mg(2+).

The protein localises to the cytoplasm. The enzyme catalyses apo-[ACP] + CoA = holo-[ACP] + adenosine 3',5'-bisphosphate + H(+). Its function is as follows. Transfers the 4'-phosphopantetheine moiety from coenzyme A to a Ser of acyl-carrier-protein. In Halothermothrix orenii (strain H 168 / OCM 544 / DSM 9562), this protein is Holo-[acyl-carrier-protein] synthase.